The following is a 173-amino-acid chain: ATP synthase subunit b (173 aa).

Residues 15 to 35 (GVEWGTVIVQVLTFIVLLALL) form a helical membrane-spanning segment.

The protein belongs to the ATPase B chain family. As to quaternary structure, F-type ATPases have 2 components, F(1) - the catalytic core - and F(0) - the membrane proton channel. F(1) has five subunits: alpha(3), beta(3), gamma(1), delta(1), epsilon(1). F(0) has three main subunits: a(1), b(2) and c(10-14). The alpha and beta chains form an alternating ring which encloses part of the gamma chain. F(1) is attached to F(0) by a central stalk formed by the gamma and epsilon chains, while a peripheral stalk is formed by the delta and b chains.

The protein resides in the cell membrane. F(1)F(0) ATP synthase produces ATP from ADP in the presence of a proton or sodium gradient. F-type ATPases consist of two structural domains, F(1) containing the extramembraneous catalytic core and F(0) containing the membrane proton channel, linked together by a central stalk and a peripheral stalk. During catalysis, ATP synthesis in the catalytic domain of F(1) is coupled via a rotary mechanism of the central stalk subunits to proton translocation. In terms of biological role, component of the F(0) channel, it forms part of the peripheral stalk, linking F(1) to F(0). The sequence is that of ATP synthase subunit b from Staphylococcus aureus (strain MRSA252).